The following is a 539-amino-acid chain: Protein lin-14 (539 aa).

Disordered stretches follow at residues 162–230 and 262–293; these read PTLP…SNHS and ETAP…PRKP. 2 stretches are compositionally biased toward polar residues: residues 163 to 183 and 193 to 214; these read TLPN…GTDD and SVDS…NQNI. Positions 274–284 are enriched in low complexity; it reads NGTTNGTAKAG. Positions 296 to 440 are involved in sequence-specific DNA-binding; it reads DDIVKIVRNQ…CRRVRHAKKT (145 aa).

Post-translationally, cleaved by caspase ced-3 in vitro. As to expression, high levels in hypodermal, intestinal, body wall muscle, nerve ring, and ventral nerve cord cells of embryos and L1 animals.

The protein resides in the nucleus. Its function is as follows. Heterochronic protein which controls the choice of stage specific cell fates. Involved in the temporal progression of vulval fate patterning, possibly by inhibiting lin-12. Acts as a transcription factor involved in the stage-specific repression of various genes, including insulin/insulin-like growth factor gene ins-33 and neuropeptide-encoding gene nlp-45. Binds to the consensus sequence 5'-[CT]GGA[AG]-3' in the regulatory elements of target genes. Plays a role in governing the developmental timing of male tail tip morphogenesis. Plays a role in controlling the timing of seam cell development during the larval stages. Plays a role in promoting survival at high temperatures in larvae. Involved in maintenance of the architecture of the ventral nerve cord, perhaps acting via modulating expression of the immunoglobulin domain gene zig-4. In terms of biological role, may specify L2 and later cell fates, creating a temporal switch. Functionally, may be involved in specifying L1 cell fates. This Caenorhabditis elegans protein is Protein lin-14.